The sequence spans 1693 residues: Putative stoned B-like protein (1693 aa).

The span at 1–12 (MSWRDRDFDPHG) shows a compositional bias: basic and acidic residues. 7 disordered regions span residues 1 to 54 (MSWR…ELPA), 222 to 322 (NQIP…VEKS), 334 to 371 (TVEI…PTFS), 383 to 438 (KEMT…DPNA), 585 to 807 (GDYH…TSAA), 841 to 869 (KKME…DEED), and 899 to 1024 (PVKE…FVAD). The segment covering 26–39 (SSSERAASMRAMRS) has biased composition (low complexity). Basic and acidic residues-rich tracts occupy residues 279 to 301 (MEDK…KEET) and 311 to 322 (TTEKHQNEVEKS). Residues 360–371 (EEEEDDDLPTFS) are compositionally biased toward acidic residues. Over residues 393-412 (ENVENEKQEDTHISEGHVEY) the composition is skewed to basic and acidic residues. The span at 596–615 (DENSTSAISGYEQNGASTSL) shows a compositional bias: polar residues. The span at 632 to 643 (YYQGQEYQQEYY) shows a compositional bias: low complexity. A DPF 1 motif is present at residues 684–686 (DPF). Residues 708–722 (SPTPEASSSTGTSAP) are compositionally biased toward low complexity. Over residues 745–760 (PPRPPPAARPPPPRPA) the composition is skewed to pro residues. Residues 786 to 807 (KVSTAVKSTESTLKNLEETSAA) show a composition bias toward polar residues. Residues 899–913 (PVKEIKKAPEIRRVD) show a composition bias toward basic and acidic residues. 3 consecutive short sequence motifs (DPF) follow at residues 1006–1008 (DPF), 1024–1026 (DPF), and 1039–1041 (DPF). Positions 1062 to 1095 (ANAENEDDFYNGRQSPTLSTPTPEGGSPISQQRP) are disordered. Residues 1073–1095 (GRQSPTLSTPTPEGGSPISQQRP) show a composition bias toward polar residues. An SHD domain is found at 1136 to 1283 (GWDLMVRHPI…KCKITRTAKP (148 aa)). In terms of domain architecture, MHD spans 1287-1606 (QDEVQIHCYD…AKYQYKVEID (320 aa)). The interval 1633-1693 (ELHQPTFNPS…IQIDMKNYGY (61 aa)) is disordered. Over residues 1637–1651 (PTFNPSTQESDTQQG) the composition is skewed to polar residues.

Belongs to the Stoned B family.

It is found in the cytoplasm. Potential adapter protein, which may be involved in endocytic vesicle recycling of synaptic vesicles. In Caenorhabditis elegans, this protein is Putative stoned B-like protein (unc-41).